Consider the following 470-residue polypeptide: Ubiquitin carboxyl-terminal hydrolase calypso (470 aa).

A UCH catalytic domain is found at 11–241 (GWLELESDPG…ITHKLKMLRT (231 aa)). Cysteine 98 serves as the catalytic Nucleophile. The active-site Proton donor is the histidine 177. A coiled-coil region spans residues 260 to 280 (ESRSQAEIRETVDKIKKEEQE). The 29-residue stretch at 392-420 (NYDEFICTFLSMLAYQGELGDLVTQHLVT) folds into the ULD domain. Positions 422–470 (RKPSLGGVQNSGSRGVVRNYNKKSTTNGSSPKTPSSKRRRGRTKYRKRK) are positively charged C-terminal tail required for binding nucleosomes. Residues 423–434 (KPSLGGVQNSGS) are compositionally biased toward polar residues. Residues 423–470 (KPSLGGVQNSGSRGVVRNYNKKSTTNGSSPKTPSSKRRRGRTKYRKRK) form a disordered region. The span at 456–470 (SSKRRRGRTKYRKRK) shows a compositional bias: basic residues.

The protein belongs to the peptidase C12 family. BAP1 subfamily. As to quaternary structure, catalytic component of the polycomb repressive deubiquitinase (PR-DUB) complex, at least composed of caly/calypso, Asx and sba (MBD5/6 homolog). The PR-DUB complex associates with nucleosomes to mediate deubiquitination of histone H2AK118ub1 substrates; the association requires the positively charged C-terminal tail of caly, probably due to direct binding of DNA. Interacts (via ULD domain) with Asx (via DEUBAD domain); the interaction produces a stable heterodimer with a composite binding site for ubiquitin. Homodimerizes (via coiled-coil hinge-region between the UCH and ULD domains) to mediate assembly of 2 copies of the caly-Asx heterodimer into a bisymmetric tetramer; dimerization enhances PR-DUB association with nucleosomes.

The protein resides in the nucleus. The enzyme catalyses Thiol-dependent hydrolysis of ester, thioester, amide, peptide and isopeptide bonds formed by the C-terminal Gly of ubiquitin (a 76-residue protein attached to proteins as an intracellular targeting signal).. Catalytic component of the polycomb repressive deubiquitinase (PR-DUB) complex, a complex that specifically mediates deubiquitination of histone H2A monoubiquitinated at 'Lys-119' (H2AK118ub1). Mediates bisymmetric organization of the PR-DUB complex and is involved in association with nucleosomes to mediate deubiquitination. Does not deubiquitinate monoubiquitinated histone H2B. Required to maintain the transcriptionally repressive state of homeotic genes throughout development. The PR-DUB complex has weak or no activity toward 'Lys-48'- and 'Lys-63'-linked polyubiquitin chains. Polycomb group (PcG) protein. The sequence is that of Ubiquitin carboxyl-terminal hydrolase calypso from Culex quinquefasciatus (Southern house mosquito).